The chain runs to 249 residues: FMN reductase (NADPH) (249 aa).

The protein belongs to the flavin oxidoreductase frp family. In terms of assembly, homodimer.

The enzyme catalyses FMNH2 + NADP(+) = FMN + NADPH + 2 H(+). Its function is as follows. Reduces FMNH(2) to FMN, with NADPH as reductant. It also reduces nitroaromatic compounds, quinones and azo dyes. The polypeptide is FMN reductase (NADPH) (nfrA1) (Bacillus subtilis (strain 168)).